The primary structure comprises 115 residues: Ribonuclease P protein component (115 aa).

It belongs to the RnpA family. In terms of assembly, consists of a catalytic RNA component (M1 or rnpB) and a protein subunit.

It carries out the reaction Endonucleolytic cleavage of RNA, removing 5'-extranucleotides from tRNA precursor.. RNaseP catalyzes the removal of the 5'-leader sequence from pre-tRNA to produce the mature 5'-terminus. It can also cleave other RNA substrates such as 4.5S RNA. The protein component plays an auxiliary but essential role in vivo by binding to the 5'-leader sequence and broadening the substrate specificity of the ribozyme. This chain is Ribonuclease P protein component, found in Macrococcus caseolyticus (strain JCSC5402) (Macrococcoides caseolyticum).